The following is a 146-amino-acid chain: Large ribosomal subunit protein uL15 (146 aa).

The interval 1–54 is disordered; it reads MKLHELKPAAGSKKAPKRIGRGTGSGLGRNAGKGEKGQNARSGGGVRPGFEGGQ. 2 stretches are compositionally biased toward gly residues: residues 21 to 31 and 42 to 52; these read RGTGSGLGRNA and SGGGVRPGFEG.

This sequence belongs to the universal ribosomal protein uL15 family. As to quaternary structure, part of the 50S ribosomal subunit.

Binds to the 23S rRNA. This Clostridium beijerinckii (strain ATCC 51743 / NCIMB 8052) (Clostridium acetobutylicum) protein is Large ribosomal subunit protein uL15.